Here is a 647-residue protein sequence, read N- to C-terminus: Threonine--tRNA ligase (647 aa).

The TGS domain maps to 1 to 63; that stretch reads MYMIQLTFPD…EHDGKIELVM (63 aa). Positions 247 to 544 are catalytic; it reads DHRKLGKELD…LIEEYKGAFP (298 aa). Residues Cys-340, His-391, and His-521 each contribute to the Zn(2+) site.

The protein belongs to the class-II aminoacyl-tRNA synthetase family. In terms of assembly, homodimer. The cofactor is Zn(2+).

The protein resides in the cytoplasm. The enzyme catalyses tRNA(Thr) + L-threonine + ATP = L-threonyl-tRNA(Thr) + AMP + diphosphate + H(+). In terms of biological role, catalyzes the attachment of threonine to tRNA(Thr) in a two-step reaction: L-threonine is first activated by ATP to form Thr-AMP and then transferred to the acceptor end of tRNA(Thr). Also edits incorrectly charged L-seryl-tRNA(Thr). The chain is Threonine--tRNA ligase from Exiguobacterium sp. (strain ATCC BAA-1283 / AT1b).